The primary structure comprises 155 residues: SsrA-binding protein (155 aa).

The protein belongs to the SmpB family.

It localises to the cytoplasm. Required for rescue of stalled ribosomes mediated by trans-translation. Binds to transfer-messenger RNA (tmRNA), required for stable association of tmRNA with ribosomes. tmRNA and SmpB together mimic tRNA shape, replacing the anticodon stem-loop with SmpB. tmRNA is encoded by the ssrA gene; the 2 termini fold to resemble tRNA(Ala) and it encodes a 'tag peptide', a short internal open reading frame. During trans-translation Ala-aminoacylated tmRNA acts like a tRNA, entering the A-site of stalled ribosomes, displacing the stalled mRNA. The ribosome then switches to translate the ORF on the tmRNA; the nascent peptide is terminated with the 'tag peptide' encoded by the tmRNA and targeted for degradation. The ribosome is freed to recommence translation, which seems to be the essential function of trans-translation. This is SsrA-binding protein from Lactococcus lactis subsp. lactis (strain IL1403) (Streptococcus lactis).